The primary structure comprises 949 residues: Zinc finger CCHC domain-containing protein 14 (949 aa).

Disordered stretches follow at residues 25 to 44, 59 to 92, 200 to 221, 236 to 262, 355 to 457, and 739 to 779; these read SSLNGGGGHGGKGAPGPGGA, EAPVSSVSNSLENALHTSAHSTEESLPKRPLGKH, STSSPPQQLQSPSPGNPSLSKV, AGIPSSQSGAQHHGQHPAGSAAPLPHC, KEKS…DKEK, and PESS…PQPA. The segment covering 28–43 has biased composition (gly residues); that stretch reads NGGGGHGGKGAPGPGG. Residues 61–78 show a composition bias toward polar residues; the sequence is PVSSVSNSLENALHTSAH. Residues 200 to 219 show a composition bias toward low complexity; sequence STSSPPQQLQSPSPGNPSLS. Residues 395 to 411 are compositionally biased toward basic and acidic residues; sequence HAAELRVEVEQPHHQLP. The span at 416 to 425 shows a compositional bias: low complexity; sequence SSEYSSSSSS. Positions 431 to 457 are enriched in basic and acidic residues; it reads AREESSDSAEENDRRVEIHLESSDKEK. The segment at 906-923 adopts a CCHC-type zinc-finger fold; the sequence is LSCYNCGATGHRAQDCKQ.

The polypeptide is Zinc finger CCHC domain-containing protein 14 (ZCCHC14) (Homo sapiens (Human)).